Consider the following 157-residue polypeptide: NAD(P)H-quinone oxidoreductase subunit N (157 aa).

Belongs to the complex I NdhN subunit family. As to quaternary structure, NDH-1 can be composed of about 15 different subunits; different subcomplexes with different compositions have been identified which probably have different functions.

It localises to the cellular thylakoid membrane. The catalysed reaction is a plastoquinone + NADH + (n+1) H(+)(in) = a plastoquinol + NAD(+) + n H(+)(out). It carries out the reaction a plastoquinone + NADPH + (n+1) H(+)(in) = a plastoquinol + NADP(+) + n H(+)(out). NDH-1 shuttles electrons from an unknown electron donor, via FMN and iron-sulfur (Fe-S) centers, to quinones in the respiratory and/or the photosynthetic chain. The immediate electron acceptor for the enzyme in this species is believed to be plastoquinone. Couples the redox reaction to proton translocation, and thus conserves the redox energy in a proton gradient. Cyanobacterial NDH-1 also plays a role in inorganic carbon-concentration. The sequence is that of NAD(P)H-quinone oxidoreductase subunit N from Picosynechococcus sp. (strain ATCC 27264 / PCC 7002 / PR-6) (Agmenellum quadruplicatum).